Here is a 650-residue protein sequence, read N- to C-terminus: 1-deoxy-D-xylulose-5-phosphate synthase (650 aa).

Residues His-73 and 113-115 (SHA) each bind thiamine diphosphate. Asp-145 provides a ligand contact to Mg(2+). Residues 146–147 (GA), Asn-175, Tyr-287, and Glu-369 contribute to the thiamine diphosphate site. Position 175 (Asn-175) interacts with Mg(2+). Positions 629 to 650 (SARPLPEDAERVPMRAEDDEQA) are disordered. Basic and acidic residues predominate over residues 633-644 (LPEDAERVPMRA).

This sequence belongs to the transketolase family. DXPS subfamily. In terms of assembly, homodimer. Mg(2+) serves as cofactor. The cofactor is thiamine diphosphate.

It carries out the reaction D-glyceraldehyde 3-phosphate + pyruvate + H(+) = 1-deoxy-D-xylulose 5-phosphate + CO2. It functions in the pathway metabolic intermediate biosynthesis; 1-deoxy-D-xylulose 5-phosphate biosynthesis; 1-deoxy-D-xylulose 5-phosphate from D-glyceraldehyde 3-phosphate and pyruvate: step 1/1. Its function is as follows. Catalyzes the acyloin condensation reaction between C atoms 2 and 3 of pyruvate and glyceraldehyde 3-phosphate to yield 1-deoxy-D-xylulose-5-phosphate (DXP). In Clavibacter sepedonicus (Clavibacter michiganensis subsp. sepedonicus), this protein is 1-deoxy-D-xylulose-5-phosphate synthase.